A 20-amino-acid polypeptide reads, in one-letter code: Cytochrome c oxidase subunit 5B heart, mitochondrial (20 aa).

The tract at residues 1–20 (XXLKGIPTDEEQATGLEEYA) is disordered.

It belongs to the cytochrome c oxidase subunit 5B family. Component of the cytochrome c oxidase (complex IV, CIV), a multisubunit enzyme composed of 14 subunits. The complex is composed of a catalytic core of 3 subunits MT-CO1, MT-CO2 and MT-CO3, encoded in the mitochondrial DNA, and 11 supernumerary subunits COX4I, COX5A, COX5B, COX6A, COX6B, COX6C, COX7A, COX7B, COX7C, COX8 and NDUFA4, which are encoded in the nuclear genome. The complex exists as a monomer or a dimer and forms supercomplexes (SCs) in the inner mitochondrial membrane with NADH-ubiquinone oxidoreductase (complex I, CI) and ubiquinol-cytochrome c oxidoreductase (cytochrome b-c1 complex, complex III, CIII), resulting in different assemblies (supercomplex SCI(1)III(2)IV(1) and megacomplex MCI(2)III(2)IV(2)).

It localises to the mitochondrion inner membrane. The protein operates within energy metabolism; oxidative phosphorylation. Component of the cytochrome c oxidase, the last enzyme in the mitochondrial electron transport chain which drives oxidative phosphorylation. The respiratory chain contains 3 multisubunit complexes succinate dehydrogenase (complex II, CII), ubiquinol-cytochrome c oxidoreductase (cytochrome b-c1 complex, complex III, CIII) and cytochrome c oxidase (complex IV, CIV), that cooperate to transfer electrons derived from NADH and succinate to molecular oxygen, creating an electrochemical gradient over the inner membrane that drives transmembrane transport and the ATP synthase. Cytochrome c oxidase is the component of the respiratory chain that catalyzes the reduction of oxygen to water. Electrons originating from reduced cytochrome c in the intermembrane space (IMS) are transferred via the dinuclear copper A center (CU(A)) of subunit 2 and heme A of subunit 1 to the active site in subunit 1, a binuclear center (BNC) formed by heme A3 and copper B (CU(B)). The BNC reduces molecular oxygen to 2 water molecules using 4 electrons from cytochrome c in the IMS and 4 protons from the mitochondrial matrix. This is Cytochrome c oxidase subunit 5B heart, mitochondrial from Oncorhynchus mykiss (Rainbow trout).